A 103-amino-acid polypeptide reads, in one-letter code: uncharacterized protein (103 aa).

This is an uncharacterized protein from Saccharomyces cerevisiae (strain ATCC 204508 / S288c) (Baker's yeast).